Consider the following 742-residue polypeptide: Phosphoribosylformylglycinamidine synthase subunit PurL (742 aa).

Residue histidine 54 is part of the active site. Tyrosine 57 and lysine 96 together coordinate ATP. Residue glutamate 98 coordinates Mg(2+). Substrate-binding positions include serine 99–histidine 102 and arginine 121. Histidine 100 serves as the catalytic Proton acceptor. Aspartate 122 serves as a coordination point for Mg(2+). The substrate site is built by glycine 225 and glutamine 245. Aspartate 273 contacts Mg(2+). Position 317–319 (glutamate 317–glutamine 319) interacts with substrate. Glycine 537 is a binding site for ATP. Asparagine 538 contacts Mg(2+). Residue serine 540 participates in substrate binding.

The protein belongs to the FGAMS family. As to quaternary structure, monomer. Part of the FGAM synthase complex composed of 1 PurL, 1 PurQ and 2 PurS subunits.

Its subcellular location is the cytoplasm. It carries out the reaction N(2)-formyl-N(1)-(5-phospho-beta-D-ribosyl)glycinamide + L-glutamine + ATP + H2O = 2-formamido-N(1)-(5-O-phospho-beta-D-ribosyl)acetamidine + L-glutamate + ADP + phosphate + H(+). The catalysed reaction is L-glutamine + H2O = L-glutamate + NH4(+). It functions in the pathway purine metabolism; IMP biosynthesis via de novo pathway; 5-amino-1-(5-phospho-D-ribosyl)imidazole from N(2)-formyl-N(1)-(5-phospho-D-ribosyl)glycinamide: step 1/2. Its function is as follows. Part of the phosphoribosylformylglycinamidine synthase complex involved in the purines biosynthetic pathway. Catalyzes the ATP-dependent conversion of formylglycinamide ribonucleotide (FGAR) and glutamine to yield formylglycinamidine ribonucleotide (FGAM) and glutamate. The FGAM synthase complex is composed of three subunits. PurQ produces an ammonia molecule by converting glutamine to glutamate. PurL transfers the ammonia molecule to FGAR to form FGAM in an ATP-dependent manner. PurS interacts with PurQ and PurL and is thought to assist in the transfer of the ammonia molecule from PurQ to PurL. This is Phosphoribosylformylglycinamidine synthase subunit PurL from Bacillus subtilis (strain 168).